A 952-amino-acid polypeptide reads, in one-letter code: Disintegrin and metalloproteinase domain-containing protein adm-2 (952 aa).

Topologically, residues 1 to 672 (MTDTLDLKLS…NEAYRFRGIT (672 aa)) are extracellular. 2 N-linked (GlcNAc...) asparagine glycosylation sites follow: asparagine 125 and asparagine 301. The Peptidase M12B domain maps to 177–373 (RFVELALVAD…GIDLCLFNEP (197 aa)). Disulfide bonds link cysteine 287–cysteine 368, cysteine 330–cysteine 352, and cysteine 332–cysteine 337. Histidine 312 is a binding site for Zn(2+). The active site involves glutamate 313. Zn(2+) contacts are provided by histidine 316 and histidine 322. Positions 379 to 466 (DAKCGNGIVE…DCPADFFVQN (88 aa)) constitute a Disintegrin domain. Asparagine 406 is a glycosylation site (N-linked (GlcNAc...) asparagine). 4 disulfide bridges follow: cysteine 438–cysteine 458, cysteine 624–cysteine 634, cysteine 628–cysteine 640, and cysteine 642–cysteine 651. An EGF-like domain is found at 620–652 (VTAQCLDNCNFRGVCNNVGNCHCERGFGGIACE). The chain crosses the membrane as a helical span at residues 673-693 (LSSTFLVFFCLFGIFIGGLCV). Over 694-952 (YYRVKRKRNL…AAIFDQKLKK (259 aa)) the chain is Cytoplasmic. Disordered regions lie at residues 778-809 (IPMV…ERAT) and 829-938 (SFNT…EKVD). 2 stretches are compositionally biased toward basic and acidic residues: residues 798 to 809 (AEKEEQNQERAT) and 849 to 873 (PSDD…DRLN). The span at 905 to 914 (QAPPPPPPAH) shows a compositional bias: pro residues. Residues 925 to 938 (KVSEDAAATEEKVD) are compositionally biased toward basic and acidic residues.

Zn(2+) is required as a cofactor. As to expression, expressed in hyp7 large epidermal syncytium (punctate distribution), seam cell syncytia, anterior epidermis, neurons located in the head, tail and central body, proximal oogenic cells (levels increasing in maturing oocytes) and myoepithelial cells of the spermatheca (at protein level). Not detected in mature sperm cells.

The protein localises to the cell membrane. Its subcellular location is the endosome membrane. It is found in the lysosome membrane. In terms of biological role, metalloprotease that cleaves and releases a number of molecules. Negative regulator of lrp-1 protein levels, potentially by influencing its endosomal trafficking. Involved in regulating the molting process. This is Disintegrin and metalloproteinase domain-containing protein adm-2 from Caenorhabditis elegans.